Consider the following 768-residue polypeptide: Actin filament-associated protein 1-like 1 (768 aa).

Positions 83-145 are disordered; it reads LRDMSDDGEP…GKSPEYISSH (63 aa). S87, S93, S97, S103, and S153 each carry phosphoserine. The segment covering 165-185 has biased composition (polar residues); it reads SYPTTRMNGELKNSYNDSDAM. The disordered stretch occupies residues 165–211; sequence SYPTTRMNGELKNSYNDSDAMSSSYESYDEEEEEEKGRQPKHQWPSE. A PH 1 domain is found at 220–316; that stretch reads DCRICAFLLR…WLKVIREVSR (97 aa). S329 and S343 each carry phosphoserine. Residues 340–349 show a composition bias toward basic and acidic residues; it reads KRLSQEKQNS. Residues 340 to 382 are disordered; the sequence is KRLSQEKQNSDSDSLGMNDSGSTLGRREACEHGKGKKNSLAEL. Over residues 350 to 362 the composition is skewed to polar residues; sequence DSDSLGMNDSGST. The region spanning 418–512 is the PH 2 domain; it reads EVPCCGYLNV…WLGLLLVEMG (95 aa). Y557 bears the Phosphotyrosine mark. Residues 564-609 form a disordered region; that stretch reads KVQDEEPQRPTGAQVKRHASSCSEKSHRADPQVKVKRHASSANQYK. Positions 587 to 596 are enriched in basic and acidic residues; sequence EKSHRADPQV. Residues 611–701 are a coiled coil; that stretch reads GKNRAEEDAR…AVKERLQQSL (91 aa). The segment at 705 to 768 is disordered; that stretch reads PALGLSVSNK…KAKEWEMKKT (64 aa). The span at 710–734 shows a compositional bias: polar residues; the sequence is SVSNKNKSQDTTNKPQSNAPEQSLP. S747 bears the Phosphoserine mark. Positions 759–768 are enriched in basic and acidic residues; sequence KAKEWEMKKT.

Interacts with CTTN.

It localises to the cytoplasm. Its subcellular location is the cell projection. The protein localises to the podosome. It is found in the invadopodium. The protein resides in the cytoskeleton. It localises to the stress fiber. Its function is as follows. May be involved in podosome and invadosome formation. In Mus musculus (Mouse), this protein is Actin filament-associated protein 1-like 1 (Afap1l1).